We begin with the raw amino-acid sequence, 948 residues long: Puromycin-sensitive aminopeptidase (948 aa).

Substrate contacts are provided by residues Glu-206 and 341–345 (GAMEN). His-377 is a binding site for Zn(2+). Glu-378 functions as the Proton acceptor in the catalytic mechanism. Zn(2+) is bound by residues His-381 and Glu-400.

The protein belongs to the peptidase M1 family. Zn(2+) serves as cofactor. In terms of tissue distribution, expressed mainly in intestinal cells in the posterior part of the intestine and in amphid sensory neurons and nerve ring neurons. Expressed in neurons in the male tail. Expressed in mature spermatids (at protein level).

The protein localises to the cytoplasm. The protein resides in the cell cortex. Its subcellular location is the chromosome. It localises to the cytoskeleton. It is found in the spindle pole. It carries out the reaction Release of an N-terminal amino acid, preferentially alanine, from a wide range of peptides, amides and arylamides.. With respect to regulation, inhibited by chelating agent 1,10-phenanthroline, aminopeptidase inhibitors actinonin, amastatin, and leuhistin, and to a lesser extent by puromycin. Its function is as follows. Aminopeptidase. Required for the exit from meiosis, probably upstream of cyclin cyb-3. Involved in the establishment of the anterior-posterior polarity at the embryonic 1-cell stage by regulating the dynamics of sperm-donated centrosomes. Plays a role in oocyte maturation. Required for embryonic development. The sequence is that of Puromycin-sensitive aminopeptidase from Caenorhabditis elegans.